A 592-amino-acid chain; its full sequence is Anaphase-promoting complex subunit 8 (592 aa).

8 TPR repeats span residues 66–99, 160–193, 291–324, 359–392, 393–426, 428–460, 461–494, and 496–528; these read EYYK…QLPI, QQQQ…NKKD, TYIL…EPNR, PETC…NDRY, LSAW…NPRD, RAWY…RPYD, PRMW…YDRE, and VAIN…CDQE. Positions 129 to 166 are disordered; that stretch reads QQQAQQQAQQAQQESQQNDKNNDTNNNNKTDQQQQQQQ.

It belongs to the APC8/CDC23 family. In terms of assembly, the APC/C is composed of at least 13 subunits that stay tightly associated throughout the cell cycle: anapc1, anapc2, anapc3, anapc4, anapc5, anapc6, anapc7, anapc8, anapc10, anapc11, cdc20, cdc26 and cdh1.

Its subcellular location is the nucleus. It participates in protein modification; protein ubiquitination. Functionally, component of the anaphase promoting complex/cyclosome (APC/C), a cell cycle-regulated E3 ubiquitin-protein ligase complex that controls progression through mitosis and the G1 phase of the cell cycle. This chain is Anaphase-promoting complex subunit 8 (anapc8), found in Dictyostelium discoideum (Social amoeba).